The chain runs to 110 residues: Small ribosomal subunit protein uS10m (110 aa).

It belongs to the universal ribosomal protein uS10 family.

Its subcellular location is the mitochondrion. The sequence is that of Small ribosomal subunit protein uS10m (RPS10) from Pisum sativum (Garden pea).